A 399-amino-acid polypeptide reads, in one-letter code: S-adenosylmethionine synthase (399 aa).

ATP is bound at residue histidine 16. Residue aspartate 18 participates in Mg(2+) binding. Glutamate 44 serves as a coordination point for K(+). L-methionine contacts are provided by glutamate 57 and glutamine 100. The flexible loop stretch occupies residues 100-110 (QSSDIAQGVNE). ATP-binding positions include 177 to 179 (DAK), 244 to 245 (RF), aspartate 253, 259 to 260 (RK), alanine 276, and lysine 280. Aspartate 253 serves as a coordination point for L-methionine. Lysine 284 lines the L-methionine pocket.

The protein belongs to the AdoMet synthase family. Homotetramer; dimer of dimers. Requires Mg(2+) as cofactor. K(+) is required as a cofactor.

The protein localises to the cytoplasm. The catalysed reaction is L-methionine + ATP + H2O = S-adenosyl-L-methionine + phosphate + diphosphate. The protein operates within amino-acid biosynthesis; S-adenosyl-L-methionine biosynthesis; S-adenosyl-L-methionine from L-methionine: step 1/1. Its function is as follows. Catalyzes the formation of S-adenosylmethionine (AdoMet) from methionine and ATP. The overall synthetic reaction is composed of two sequential steps, AdoMet formation and the subsequent tripolyphosphate hydrolysis which occurs prior to release of AdoMet from the enzyme. This Lactococcus lactis subsp. cremoris (strain MG1363) protein is S-adenosylmethionine synthase.